A 188-amino-acid chain; its full sequence is Elongation factor P-like protein (188 aa).

Belongs to the elongation factor P family.

This is Elongation factor P-like protein from Alcanivorax borkumensis (strain ATCC 700651 / DSM 11573 / NCIMB 13689 / SK2).